The following is an 81-amino-acid chain: Insect-toxin Cn10 (81 aa).

Positions 1 to 13 (ITACLVLIGTVCA) are cleaved as a signal peptide. The region spanning 14–79 (KEGYLVNKST…TYPIPGKTCR (66 aa)) is the LCN-type CS-alpha/beta domain. Disulfide bonds link cysteine 25/cysteine 78, cysteine 29/cysteine 54, cysteine 38/cysteine 59, and cysteine 42/cysteine 61. A propeptide (removed by a carboxypeptidase) is located at residue lysine 81.

The protein belongs to the long (4 C-C) scorpion toxin superfamily. Sodium channel inhibitor family. Beta subfamily. As to expression, expressed by the venom gland.

The protein resides in the secreted. Functionally, beta toxins bind voltage-independently at site-4 of sodium channels (Nav) and shift the voltage of activation toward more negative potentials thereby affecting sodium channel activation and promoting spontaneous and repetitive firing. Is toxic on insects and crustaceans, but not on mammals. The polypeptide is Insect-toxin Cn10 (Centruroides noxius (Mexican scorpion)).